A 648-amino-acid polypeptide reads, in one-letter code: DNA gyrase subunit B (648 aa).

The Toprim domain occupies 432–546 (RELFIVEGNS…YGFVYLAQPP (115 aa)). Mg(2+) is bound by residues glutamate 438, aspartate 511, and aspartate 513.

Belongs to the type II topoisomerase GyrB family. Heterotetramer, composed of two GyrA and two GyrB chains. In the heterotetramer, GyrA contains the active site tyrosine that forms a transient covalent intermediate with DNA, while GyrB binds cofactors and catalyzes ATP hydrolysis. It depends on Mg(2+) as a cofactor. The cofactor is Mn(2+). Ca(2+) serves as cofactor.

The protein resides in the cytoplasm. It catalyses the reaction ATP-dependent breakage, passage and rejoining of double-stranded DNA.. Functionally, a type II topoisomerase that negatively supercoils closed circular double-stranded (ds) DNA in an ATP-dependent manner to modulate DNA topology and maintain chromosomes in an underwound state. Negative supercoiling favors strand separation, and DNA replication, transcription, recombination and repair, all of which involve strand separation. Also able to catalyze the interconversion of other topological isomers of dsDNA rings, including catenanes and knotted rings. Type II topoisomerases break and join 2 DNA strands simultaneously in an ATP-dependent manner. In Metamycoplasma hominis (strain ATCC 23114 / DSM 25592 / NBRC 14850 / NCTC 10111 / PG21) (Mycoplasma hominis), this protein is DNA gyrase subunit B.